Consider the following 152-residue polypeptide: Large ribosomal subunit protein bL9 (152 aa).

Belongs to the bacterial ribosomal protein bL9 family.

In terms of biological role, binds to the 23S rRNA. The polypeptide is Large ribosomal subunit protein bL9 (Prochlorococcus marinus (strain NATL1A)).